Here is a 232-residue protein sequence, read N- to C-terminus: Small ribosomal subunit protein uS2 (232 aa).

The protein belongs to the universal ribosomal protein uS2 family.

This is Small ribosomal subunit protein uS2 from Carboxydothermus hydrogenoformans (strain ATCC BAA-161 / DSM 6008 / Z-2901).